The chain runs to 173 residues: Photosystem I assembly protein Ycf3 (173 aa).

TPR repeat units follow at residues 35-68 (AFVY…EEDT), 72-105 (GYIL…NPRL), and 120-153 (GEKE…APNN).

The protein belongs to the Ycf3 family.

It is found in the cellular thylakoid membrane. In terms of biological role, essential for the assembly of the photosystem I (PSI) complex. May act as a chaperone-like factor to guide the assembly of the PSI subunits. The polypeptide is Photosystem I assembly protein Ycf3 (Nostoc punctiforme (strain ATCC 29133 / PCC 73102)).